The sequence spans 147 residues: Hemoglobin subunit beta (147 aa).

The Globin domain maps to 2 to 147 (EWTDAERSAI…VVSALCRQYH (146 aa)). Positions 63 and 92 each coordinate heme b.

It belongs to the globin family. As to quaternary structure, heterotetramer of two alpha chains and two beta chains. Red blood cells.

Functionally, involved in oxygen transport from gills to the various peripheral tissues. The sequence is that of Hemoglobin subunit beta (hbb) from Carassius auratus (Goldfish).